We begin with the raw amino-acid sequence, 212 residues long: ER lumen protein-retaining receptor (212 aa).

The Lumenal portion of the chain corresponds to 1–2; sequence MN. Residues 3-21 form a helical membrane-spanning segment; the sequence is IFRFAGDLSHVFAIIILLL. Residues 22-35 are Cytoplasmic-facing; the sequence is KIWKTRSCAGISGK. The helical transmembrane segment at 36-53 threads the bilayer; it reads SQILFAVVYLTRYLDLFT. The Lumenal segment spans residues 54-61; sequence TYVSLYNS. A helical transmembrane segment spans residues 62–80; the sequence is VMKVLFLATSGATVYLMYV. Over 81 to 96 the chain is Cytoplasmic; it reads KFKATYDHNHDSFRIE. Residues 97 to 110 traverse the membrane as a helical segment; that stretch reads FLLVPCALLSLVIN. Topologically, residues 111 to 117 are lumenal; that stretch reads HEFTVME. A helical transmembrane segment spans residues 118–137; the sequence is VLWTFSIYLESVAILPQLFL. The Cytoplasmic portion of the chain corresponds to 138 to 149; it reads VSRTGEAESITS. Residues 150–168 traverse the membrane as a helical segment; the sequence is HYLFALGSYRALYLLNWVY. Over 169–178 the chain is Lumenal; sequence RYMVESHYDL. A helical membrane pass occupies residues 179 to 199; that stretch reads IAIFAGVVQTVLYCDFFYLYI. Topologically, residues 200-212 are cytoplasmic; it reads TKVLKGKKLQLPA.

Belongs to the ERD2 family.

It is found in the endoplasmic reticulum membrane. Required for the retention of luminal endoplasmic reticulum proteins. Determines the specificity of the luminal ER protein retention system. Also required for normal vesicular traffic through the Golgi. This chain is ER lumen protein-retaining receptor (KdelR), found in Drosophila melanogaster (Fruit fly).